The sequence spans 81 residues: Photosystem I iron-sulfur center (81 aa).

2 4Fe-4S ferredoxin-type domains span residues 2–31 (SHSVKIYDTCIGCTQCVRACPTDVLEMIPW) and 39–68 (IAPAPRTEDCVGCKRCESACPTDFLSVRVY). 8 residues coordinate [4Fe-4S] cluster: Cys-11, Cys-14, Cys-17, Cys-21, Cys-48, Cys-51, Cys-54, and Cys-58.

In terms of assembly, the eukaryotic PSI reaction center is composed of at least 11 subunits. [4Fe-4S] cluster serves as cofactor.

It localises to the plastid. The protein resides in the chloroplast thylakoid membrane. The catalysed reaction is reduced [plastocyanin] + hnu + oxidized [2Fe-2S]-[ferredoxin] = oxidized [plastocyanin] + reduced [2Fe-2S]-[ferredoxin]. Its function is as follows. Apoprotein for the two 4Fe-4S centers FA and FB of photosystem I (PSI); essential for photochemical activity. FB is the terminal electron acceptor of PSI, donating electrons to ferredoxin. The C-terminus interacts with PsaA/B/D and helps assemble the protein into the PSI complex. Required for binding of PsaD and PsaE to PSI. PSI is a plastocyanin-ferredoxin oxidoreductase, converting photonic excitation into a charge separation, which transfers an electron from the donor P700 chlorophyll pair to the spectroscopically characterized acceptors A0, A1, FX, FA and FB in turn. In Chloranthus spicatus (Chulantree), this protein is Photosystem I iron-sulfur center.